Here is a 304-residue protein sequence, read N- to C-terminus: N-acetylmuramic acid 6-phosphate etherase (304 aa).

One can recognise an SIS domain in the interval 58 to 221 (IVDRMKQGGR…TTASMVKMGK (164 aa)). Catalysis depends on Glu-86, which acts as the Proton donor. The active site involves Glu-117.

Belongs to the GCKR-like family. MurNAc-6-P etherase subfamily. As to quaternary structure, homodimer.

The catalysed reaction is N-acetyl-D-muramate 6-phosphate + H2O = N-acetyl-D-glucosamine 6-phosphate + (R)-lactate. It functions in the pathway amino-sugar metabolism; N-acetylmuramate degradation. Its function is as follows. Specifically catalyzes the cleavage of the D-lactyl ether substituent of MurNAc 6-phosphate, producing GlcNAc 6-phosphate and D-lactate. This chain is N-acetylmuramic acid 6-phosphate etherase, found in Clostridioides difficile (strain 630) (Peptoclostridium difficile).